Consider the following 464-residue polypeptide: Fumarate hydratase class II (464 aa).

Substrate contacts are provided by residues 98-100, 129-132, 139-141, and threonine 187; these read SGT, HPND, and SSN. Histidine 188 (proton donor/acceptor) is an active-site residue. The active site involves serine 318. Residues serine 319 and 324–326 contribute to the substrate site; that span reads KVN.

Belongs to the class-II fumarase/aspartase family. Fumarase subfamily. Homotetramer.

The protein localises to the cytoplasm. It catalyses the reaction (S)-malate = fumarate + H2O. It functions in the pathway carbohydrate metabolism; tricarboxylic acid cycle; (S)-malate from fumarate: step 1/1. Functionally, involved in the TCA cycle. Catalyzes the stereospecific interconversion of fumarate to L-malate. This is Fumarate hydratase class II from Haemophilus ducreyi (strain 35000HP / ATCC 700724).